Consider the following 173-residue polypeptide: MMKRDTKEQIAQEIAEKFQKSQGFYFTEFQGLDVQKMSQLRLEFRKAGIEYRVVKNTLIKKALKDAADVDKLAAGLKNTTAVAFAYDDPIAPAKIIKKFSKDNEALKFKMASIDGQVFGSDSLPQLSEMLSKTENIGRLAGLLNNMVASVPMVMNAVMRNLVSVIDQVGKLEK.

Belongs to the universal ribosomal protein uL10 family. As to quaternary structure, part of the ribosomal stalk of the 50S ribosomal subunit. The N-terminus interacts with L11 and the large rRNA to form the base of the stalk. The C-terminus forms an elongated spine to which L12 dimers bind in a sequential fashion forming a multimeric L10(L12)X complex.

Functionally, forms part of the ribosomal stalk, playing a central role in the interaction of the ribosome with GTP-bound translation factors. This chain is Large ribosomal subunit protein uL10, found in Chlorobaculum tepidum (strain ATCC 49652 / DSM 12025 / NBRC 103806 / TLS) (Chlorobium tepidum).